We begin with the raw amino-acid sequence, 454 residues long: Exopolyphosphatase PRUNE1 (454 aa).

N-acetylmethionine is present on M1. Residues D28, D30, D106, and D179 each coordinate Mn(2+). Positions 106–108 match the DHH motif motif; it reads DHH. The interval 394-421 is essential for homodimerization; it reads SLIAGLSQDDEDPPLPPTPMNSLVDECP. Residues 398 to 421 form a disordered region; that stretch reads GLSQDDEDPPLPPTPMNSLVDECP. Residue S400 is modified to Phosphoserine. At T411 the chain carries Phosphothreonine. At S415 the chain carries Phosphoserine.

Belongs to the PPase class C family. Prune subfamily. Homooligomer. Able to homodimerize via its C-terminal domain. Interacts with NME1. Interacts with GSK3; at focal adhesion complexes where paxillin and vinculin are colocalized. Interacts with alpha and beta tubulin. Mn(2+) serves as cofactor.

Its subcellular location is the cytoplasm. It localises to the nucleus. The protein localises to the cell junction. The protein resides in the focal adhesion. The catalysed reaction is diphosphate + H2O = 2 phosphate + H(+). Activated by magnesium ions and inhibited by manganese ions. Inhibited by dipyridamole, moderately sensitive to IBMX and inhibited by vinpocetine. Its function is as follows. Phosphodiesterase (PDE) that has higher activity toward cAMP than cGMP, as substrate. Plays a role in cell proliferation, migration and differentiation, and acts as a negative regulator of NME1. Plays a role in the regulation of neurogenesis. Involved in the regulation of microtubule polymerization. In Rattus norvegicus (Rat), this protein is Exopolyphosphatase PRUNE1 (Prune1).